Consider the following 292-residue polypeptide: Bifunctional protein FolD 1 (292 aa).

Position 165-167 (165-167) interacts with NADP(+); it reads GRS.

Belongs to the tetrahydrofolate dehydrogenase/cyclohydrolase family. Homodimer.

The catalysed reaction is (6R)-5,10-methylene-5,6,7,8-tetrahydrofolate + NADP(+) = (6R)-5,10-methenyltetrahydrofolate + NADPH. The enzyme catalyses (6R)-5,10-methenyltetrahydrofolate + H2O = (6R)-10-formyltetrahydrofolate + H(+). It participates in one-carbon metabolism; tetrahydrofolate interconversion. In terms of biological role, catalyzes the oxidation of 5,10-methylenetetrahydrofolate to 5,10-methenyltetrahydrofolate and then the hydrolysis of 5,10-methenyltetrahydrofolate to 10-formyltetrahydrofolate. This is Bifunctional protein FolD 1 from Myxococcus xanthus (strain DK1622).